The sequence spans 291 residues: ATP synthase gamma chain (291 aa).

This sequence belongs to the ATPase gamma chain family. In terms of assembly, F-type ATPases have 2 components, CF(1) - the catalytic core - and CF(0) - the membrane proton channel. CF(1) has five subunits: alpha(3), beta(3), gamma(1), delta(1), epsilon(1). CF(0) has three main subunits: a, b and c.

Its subcellular location is the cell inner membrane. Produces ATP from ADP in the presence of a proton gradient across the membrane. The gamma chain is believed to be important in regulating ATPase activity and the flow of protons through the CF(0) complex. The sequence is that of ATP synthase gamma chain from Burkholderia multivorans (strain ATCC 17616 / 249).